Here is a 94-residue protein sequence, read N- to C-terminus: PTS system galactitol-specific EIIB component (94 aa).

Residues 1–94 (MKRKIIVACG…QNKILTILQG (94 aa)) form the PTS EIIB type-2 domain. C9 acts as the Phosphocysteine intermediate; for EIIB activity in catalysis. A Phosphocysteine; by EIIA modification is found at C9.

As to quaternary structure, forms a complex with one each of subunit of GatA, GatB and 2 subunits of GatC.

It is found in the cytoplasm. The enzyme catalyses galactitol(out) + N(pros)-phospho-L-histidyl-[protein] = galactitol 1-phosphate(in) + L-histidyl-[protein]. The phosphoenolpyruvate-dependent sugar phosphotransferase system (PTS), a major carbohydrate active transport system, catalyzes the phosphorylation of incoming sugar substrates concomitant with their translocation across the cell membrane. The enzyme II complex composed of GatA, GatB and GatC is involved in galactitol transport. It can also use D-glucitol. In Escherichia coli (strain K12), this protein is PTS system galactitol-specific EIIB component.